A 115-amino-acid chain; its full sequence is Large ribosomal subunit protein uL22 (115 aa).

It belongs to the universal ribosomal protein uL22 family. As to quaternary structure, part of the 50S ribosomal subunit.

Functionally, this protein binds specifically to 23S rRNA; its binding is stimulated by other ribosomal proteins, e.g. L4, L17, and L20. It is important during the early stages of 50S assembly. It makes multiple contacts with different domains of the 23S rRNA in the assembled 50S subunit and ribosome. In terms of biological role, the globular domain of the protein is located near the polypeptide exit tunnel on the outside of the subunit, while an extended beta-hairpin is found that lines the wall of the exit tunnel in the center of the 70S ribosome. In Lactococcus lactis subsp. lactis (strain IL1403) (Streptococcus lactis), this protein is Large ribosomal subunit protein uL22.